The following is a 398-amino-acid chain: Inner membrane protein YjgN (398 aa).

Topologically, residues 1–24 (MAQVINEMDVPSHSFVFHGTGERY) are cytoplasmic. A helical transmembrane segment spans residues 25–45 (FLICVVNVLLTIITLGIYLPW). Residues 46 to 73 (ALMKCKRYLYANMEVNGQRFSYGITGGN) lie on the Periplasmic side of the membrane. A helical membrane pass occupies residues 74 to 94 (VFFSCLVFVFFYFAILMTVSA). Aspartate 95 is a topological domain (cytoplasmic). The chain crosses the membrane as a helical span at residues 96–116 (MPLIGCVLTLSLLVLLIFMAA). The Periplasmic portion of the chain corresponds to 117–142 (KGLRYQALMTSLNGVRFSFNCSMKGV). A helical membrane pass occupies residues 143–163 (WWVTFFLPILMAIGMGTVFFI). At 164-175 (STKMLHANSSSS) the chain is on the cytoplasmic side. Residues 176 to 196 (VIVSVVLMAIVGIVSIGIFNG) traverse the membrane as a helical segment. The Periplasmic segment spans residues 197 to 228 (TLYSLVMSFLWSNTSFGIHRFKVKLDTAYCIK). A helical transmembrane segment spans residues 229 to 249 (YAILAFLALLPFLAVAGYIIF). Residues 250-278 (DQILNAYDSSVYANDDIENLQQFMEMQRK) lie on the Cytoplasmic side of the membrane. Residues 279-299 (MIIAQLIYYFGIAVSTSYLTV) form a helical membrane-spanning segment. Residues 300-333 (SLRNHFMSNLSLNDGRIRFRSTLTYHGMLYRMCA) lie on the Periplasmic side of the membrane. The helical transmembrane segment at 334–354 (LVVISGITGGLAYPLLKIWMI) threads the bilayer. At 355–398 (DWQAKNTYLLGDLDDLPLINKEEQPDKGFLASISRGIMPSLPFL) the chain is on the cytoplasmic side.

It localises to the cell inner membrane. In Escherichia coli O157:H7, this protein is Inner membrane protein YjgN (yjgN).